The chain runs to 494 residues: Anthranilate synthase component 1 (494 aa).

Residues Ser52 and 274–276 (PYM) each bind L-tryptophan. 309–310 (GT) is a chorismate binding site. A Mg(2+)-binding site is contributed by Glu336. Chorismate contacts are provided by residues Tyr424, Arg444, 458 to 460 (GAG), and Gly460. Mg(2+) is bound at residue Glu473.

This sequence belongs to the anthranilate synthase component I family. As to quaternary structure, heterotetramer consisting of two non-identical subunits: a beta subunit (TrpG) and a large alpha subunit (TrpE). Requires Mg(2+) as cofactor.

It carries out the reaction chorismate + L-glutamine = anthranilate + pyruvate + L-glutamate + H(+). It functions in the pathway amino-acid biosynthesis; L-tryptophan biosynthesis; L-tryptophan from chorismate: step 1/5. Feedback inhibited by tryptophan. Functionally, part of a heterotetrameric complex that catalyzes the two-step biosynthesis of anthranilate, an intermediate in the biosynthesis of L-tryptophan. In the first step, the glutamine-binding beta subunit (TrpG) of anthranilate synthase (AS) provides the glutamine amidotransferase activity which generates ammonia as a substrate that, along with chorismate, is used in the second step, catalyzed by the large alpha subunit of AS (TrpE) to produce anthranilate. In the absence of TrpG, TrpE can synthesize anthranilate directly from chorismate and high concentrations of ammonia. This Aquifex aeolicus (strain VF5) protein is Anthranilate synthase component 1 (trpE).